The chain runs to 590 residues: Arginine--tRNA ligase (590 aa).

The short motif at 130–140 (PNIAKEMHVGH) is the 'HIGH' region element.

Belongs to the class-I aminoacyl-tRNA synthetase family. As to quaternary structure, monomer.

It localises to the cytoplasm. The catalysed reaction is tRNA(Arg) + L-arginine + ATP = L-arginyl-tRNA(Arg) + AMP + diphosphate. The chain is Arginine--tRNA ligase from Synechococcus sp. (strain CC9605).